Reading from the N-terminus, the 179-residue chain is Protein PLASTID REDOX INSENSITIVE 2, chloroplastic (179 aa).

A chloroplast-targeting transit peptide spans 1-69 (MASMHEALFS…SLSRRGFVCR (69 aa)).

Binds DNA when in complex with CSP41b.

The protein resides in the plastid. The protein localises to the chloroplast stroma. It is found in the chloroplast nucleoid. In terms of biological role, involved in redox-mediated retrograde signaling to synchronize the expression of photosynthetic genes from both the nuclear and plastidic genomes, especially in excess light conditions. Required for full expression of genes transcribed by the plastid-encoded RNA polymerase (PEP). Essential for embryo development. The chain is Protein PLASTID REDOX INSENSITIVE 2, chloroplastic from Arabidopsis thaliana (Mouse-ear cress).